The primary structure comprises 396 residues: Flavohemoprotein (396 aa).

Residues 1–136 (MLDAQTIATV…LANVFINREA (136 aa)) form the Globin domain. His85 is a heme b binding site. Residues Tyr95 and Glu135 each act as charge relay system in the active site. Residues 147-396 (GGWEGTRDFR…YECFGPHKVL (250 aa)) form a reductase region. One can recognise an FAD-binding FR-type domain in the interval 150–255 (EGTRDFRIVA…VAPAGDFFMA (106 aa)). FAD-binding positions include Tyr188 and 204–207 (RQYS). An NADP(+)-binding site is contributed by 268-273 (GVGQTP). Residue 389–392 (CFGP) coordinates FAD.

Belongs to the globin family. Two-domain flavohemoproteins subfamily. This sequence in the C-terminal section; belongs to the flavoprotein pyridine nucleotide cytochrome reductase family. Heme b serves as cofactor. FAD is required as a cofactor.

The catalysed reaction is 2 nitric oxide + NADPH + 2 O2 = 2 nitrate + NADP(+) + H(+). The enzyme catalyses 2 nitric oxide + NADH + 2 O2 = 2 nitrate + NAD(+) + H(+). Its function is as follows. Is involved in NO detoxification in an aerobic process, termed nitric oxide dioxygenase (NOD) reaction that utilizes O(2) and NAD(P)H to convert NO to nitrate, which protects the bacterium from various noxious nitrogen compounds. Therefore, plays a central role in the inducible response to nitrosative stress. This is Flavohemoprotein from Shigella flexneri.